The sequence spans 270 residues: tRNA pseudouridine synthase A (270 aa).

Asp-60 acts as the Nucleophile in catalysis. The interval 107 to 111 (FHARF) is RNA binding. Position 118 (Tyr-118) interacts with substrate. The interval 168-172 (QCQSR) is interaction with tRNA.

Belongs to the tRNA pseudouridine synthase TruA family. In terms of assembly, homodimer.

It catalyses the reaction uridine(38/39/40) in tRNA = pseudouridine(38/39/40) in tRNA. In terms of biological role, formation of pseudouridine at positions 38, 39 and 40 in the anticodon stem and loop of transfer RNAs. This is tRNA pseudouridine synthase A from Shigella sonnei (strain Ss046).